Here is a 635-residue protein sequence, read N- to C-terminus: Threonine--tRNA ligase (635 aa).

In terms of domain architecture, TGS spans 1-61; it reads MVSIRLPDGS…DRDASLAIVT (61 aa). The interval 242-533 is catalytic; the sequence is DHRKLGKQLD…LIEHHAGAMP (292 aa). Zn(2+)-binding residues include cysteine 333, histidine 384, and histidine 510.

The protein belongs to the class-II aminoacyl-tRNA synthetase family. In terms of assembly, homodimer. Requires Zn(2+) as cofactor.

Its subcellular location is the cytoplasm. It carries out the reaction tRNA(Thr) + L-threonine + ATP = L-threonyl-tRNA(Thr) + AMP + diphosphate + H(+). In terms of biological role, catalyzes the attachment of threonine to tRNA(Thr) in a two-step reaction: L-threonine is first activated by ATP to form Thr-AMP and then transferred to the acceptor end of tRNA(Thr). Also edits incorrectly charged L-seryl-tRNA(Thr). This is Threonine--tRNA ligase from Burkholderia vietnamiensis (strain G4 / LMG 22486) (Burkholderia cepacia (strain R1808)).